Consider the following 628-residue polypeptide: Zinc finger protein 555 (628 aa).

The 74-residue stretch at Val4–Asn77 folds into the KRAB domain. The C2H2-type 1; degenerate zinc-finger motif lies at Tyr172–His194. C2H2-type zinc fingers lie at residues Tyr200–His222, Tyr228–His250, Tyr256–His278, Tyr284–His306, His312–His334, Tyr340–His362, Tyr368–His390, Tyr396–His418, Tyr424–His446, Tyr452–His474, Tyr480–His502, Tyr508–His530, Tyr536–His558, and Tyr564–His586.

Belongs to the krueppel C2H2-type zinc-finger protein family.

It localises to the nucleus. May be involved in transcriptional regulation. The sequence is that of Zinc finger protein 555 (ZNF555) from Homo sapiens (Human).